Reading from the N-terminus, the 216-residue chain is Large ribosomal subunit protein uL3 (216 aa).

Position 157 is an N5-methylglutamine (Gln157).

This sequence belongs to the universal ribosomal protein uL3 family. Part of the 50S ribosomal subunit. Forms a cluster with proteins L14 and L19. In terms of processing, methylated by PrmB.

In terms of biological role, one of the primary rRNA binding proteins, it binds directly near the 3'-end of the 23S rRNA, where it nucleates assembly of the 50S subunit. The chain is Large ribosomal subunit protein uL3 from Stenotrophomonas maltophilia (strain R551-3).